Reading from the N-terminus, the 408-residue chain is Chaperonin GroEL (408 aa).

ATP is bound by residues 30 to 33 (TLGP), Lys-51, and 87 to 91 (DGTTT).

The protein belongs to the chaperonin (HSP60) family. As to quaternary structure, forms a cylinder of 14 subunits composed of two heptameric rings stacked back-to-back. Interacts with the co-chaperonin GroES.

It is found in the cytoplasm. The enzyme catalyses ATP + H2O + a folded polypeptide = ADP + phosphate + an unfolded polypeptide.. Together with its co-chaperonin GroES, plays an essential role in assisting protein folding. The GroEL-GroES system forms a nano-cage that allows encapsulation of the non-native substrate proteins and provides a physical environment optimized to promote and accelerate protein folding. This chain is Chaperonin GroEL, found in Rickettsia rickettsii.